A 1757-amino-acid polypeptide reads, in one-letter code: Serine/threonine-protein kinase WNK3 (1757 aa).

Residues 1–25 are disordered; sequence MATDSGEPASTEDSEKPDGVSFENR. At S62 the chain carries Phosphoserine. A compositionally biased stretch (basic and acidic residues) spans 66–82; the sequence is TEDDKVAESSRRDERKA. Positions 66–85 are disordered; that stretch reads TEDDKVAESSRRDERKAATN. A Protein kinase domain is found at 146–404; the sequence is LKFDIELGRG…IKDLLNHAFF (259 aa). ATP is bound by residues 226–229 and K276; that span reads TELM. D293 serves as the catalytic Proton acceptor. S303 and S307 each carry phosphoserine; by autocatalysis. The segment at 536–546 is interaction with KLHL3; the sequence is EYEETEVDQHV. Position 540 is a phosphothreonine (T540). Polar residues-rich tracts occupy residues 551–570, 578–604, and 674–689; these read LQGKPQQQSSSVRGDTSSEP, SDTSSHPTVAYSSNQTTSSQEQPKLTQ, and SVKENTNNPDTPSGNG. Disordered stretches follow at residues 551–604 and 674–705; these read LQGK…KLTQ and SVKENTNNPDTPSGNGKQDRNKQRRASCPRPE. Residue S1039 is modified to Phosphoserine. Positions 1404–1422 are enriched in polar residues; the sequence is VATEKNVTSTTEVSVQSGS. Disordered stretches follow at residues 1404–1440, 1479–1498, and 1536–1574; these read VATEKNVTSTTEVSVQSGSEPLDKEKNESTPGKQTCT, SLFYSPSSPMSSDNESEIED, and ATKDNKAQSSEVPLSPASPRRPRSFKSKLRSRPQSMTHS. A compositionally biased stretch (low complexity) spans 1479-1491; the sequence is SLFYSPSSPMSSD. Residues S1550 and S1553 each carry the phosphoserine modification. Basic residues predominate over residues 1555-1566; the sequence is RRPRSFKSKLRS. S1595 carries the phosphoserine modification. 2 disordered regions span residues 1621 to 1650 and 1734 to 1757; these read HFPSKPSLNQLKQSQQKSEAENWNKSCEST and PGMNLQSFPAPPVQNPASIPPGPK. Low complexity predominate over residues 1624-1637; it reads SKPSLNQLKQSQQK. Over residues 1641–1650 the composition is skewed to polar residues; the sequence is ENWNKSCEST. Pro residues predominate over residues 1742–1757; the sequence is PAPPVQNPASIPPGPK.

Belongs to the protein kinase superfamily. Ser/Thr protein kinase family. WNK subfamily. As to quaternary structure, interacts with WNK1 and WNK4. Mg(2+) is required as a cofactor. Autophosphorylated at Ser-303 and Ser-307, promoting its activity. Phosphorylation at Thr-540 prevents interaction with KLHL3 and subsequent ubiquitination and degradation by the BCR(KLHL3) complex. Post-translationally, ubiquitinated by the BCR(KLHL2) complex, leading to its degradation. Ubiquitinated by the BCR(KLHL3) complex, leading to its degradation. As to expression, expressed in pancreatic duct.

It is found in the cytoplasm. The enzyme catalyses L-seryl-[protein] + ATP = O-phospho-L-seryl-[protein] + ADP + H(+). It carries out the reaction L-threonyl-[protein] + ATP = O-phospho-L-threonyl-[protein] + ADP + H(+). With respect to regulation, activated in response to hyperosmotic stress: cell shrinkage promotes formation of a membraneless compartment that concentrates WNK3 with its substrates, OXSR1/OSR1 and STK39/SPAK. Activation requires autophosphorylation of Ser-307 and, to a lower extent, Ser-303. Autophosphorylation and subsequent activation is inhibited by increases in intracellular ionic strength: Cl(-) potently inhibits WNK3 kinase activity via direct binding. Also inhibited by K(+) ions. Kinase activity is inhibited by WNK4. Serine/threonine-protein kinase component of the WNK3-SPAK/OSR1 kinase cascade, which plays an important role in the regulation of electrolyte homeostasis and regulatory volume increase in response to hyperosmotic stress. WNK3 mediates regulatory volume increase in response to hyperosmotic stress by acting as a molecular crowding sensor, which senses cell shrinkage and mediates formation of a membraneless compartment by undergoing liquid-liquid phase separation. The membraneless compartment concentrates WNK3 with its substrates, OXSR1/OSR1 and STK39/SPAK, promoting WNK3-dependent phosphorylation and activation of downstream kinases OXSR1/OSR1 and STK39/SPAK. Following activation, OXSR1/OSR1 and STK39/SPAK catalyze phosphorylation of ion cotransporters SLC12A1/NKCC2, SLC12A2/NKCC1, SLC12A3/NCC, SLC12A4/KCC1, SLC12A5/KCC2 or SLC12A6/KCC3, regulating their activity. Phosphorylation of Na-K-Cl cotransporters SLC12A2/NKCC1 and SLC12A2/NKCC1 promote their activation and ion influx; simultaneously, phosphorylation of K-Cl cotransporters SLC12A4/KCC1, SLC12A5/KCC2 and SLC12A6/KCC3 inhibits its activity, blocking ion efflux. Phosphorylates WNK4, possibly regulating the activity of SLC12A3/NCC. May also phosphorylate NEDD4L. Also acts as a scaffold protein independently of its protein kinase activity: negatively regulates cell membrane localization of various transporters and channels, such as KCNJ1 and SLC26A9. Increases Ca(2+) influx mediated by TRPV5 and TRPV6 by enhancing their membrane expression level via a kinase-dependent pathway. The polypeptide is Serine/threonine-protein kinase WNK3 (Mus musculus (Mouse)).